Consider the following 530-residue polypeptide: Phosphoenolpyruvate carboxykinase (ATP) (530 aa).

Residues Arg-58, Tyr-195, and Lys-201 each coordinate substrate. Residues Lys-201, His-220, and 236–244 (GLSGTGKTT) each bind ATP. 2 residues coordinate Mn(2+): Lys-201 and His-220. Asp-257 serves as a coordination point for Mn(2+). Residues Glu-285, Arg-321, 440 to 441 (RI), and Thr-446 contribute to the ATP site. Arg-321 is a binding site for substrate.

It belongs to the phosphoenolpyruvate carboxykinase (ATP) family. Mn(2+) is required as a cofactor.

The protein resides in the cytoplasm. It carries out the reaction oxaloacetate + ATP = phosphoenolpyruvate + ADP + CO2. It functions in the pathway carbohydrate biosynthesis; gluconeogenesis. In terms of biological role, involved in the gluconeogenesis. Catalyzes the conversion of oxaloacetate (OAA) to phosphoenolpyruvate (PEP) through direct phosphoryl transfer between the nucleoside triphosphate and OAA. The polypeptide is Phosphoenolpyruvate carboxykinase (ATP) (Staphylococcus epidermidis (strain ATCC 12228 / FDA PCI 1200)).